A 254-amino-acid chain; its full sequence is tRNA (guanine-N(7)-)-methyltransferase (254 aa).

The tract at residues 1–34 (MNTNTPAHPPEGAPLSEATQAALASAEHAPDSPG) is disordered. S-adenosyl-L-methionine-binding residues include Glu-87, Glu-112, Asp-139, and Asp-162. The active site involves Asp-162. Substrate-binding positions include Lys-166, Asp-198, and 233–236 (TKFE).

The protein belongs to the class I-like SAM-binding methyltransferase superfamily. TrmB family.

The catalysed reaction is guanosine(46) in tRNA + S-adenosyl-L-methionine = N(7)-methylguanosine(46) in tRNA + S-adenosyl-L-homocysteine. It functions in the pathway tRNA modification; N(7)-methylguanine-tRNA biosynthesis. Catalyzes the formation of N(7)-methylguanine at position 46 (m7G46) in tRNA. The protein is tRNA (guanine-N(7)-)-methyltransferase of Bordetella bronchiseptica (strain ATCC BAA-588 / NCTC 13252 / RB50) (Alcaligenes bronchisepticus).